Here is a 262-residue protein sequence, read N- to C-terminus: Tritrans,polycis-undecaprenyl-diphosphate synthase (GGDP specific) (262 aa).

The active site involves aspartate 40. Aspartate 40 serves as a coordination point for Mg(2+). Substrate contacts are provided by residues 41-44 (GNRR), tryptophan 45, and 85-87 (SAE). Residue asparagine 88 is the Proton acceptor of the active site. Residues arginine 92, arginine 211, and 217–219 (RIS) contribute to the substrate site. Residue glutamate 230 participates in Mg(2+) binding.

It belongs to the UPP synthase family. As to quaternary structure, homodimer. The cofactor is Mg(2+).

It catalyses the reaction geranylgeranyl diphosphate + 7 isopentenyl diphosphate = tri-trans,hepta-cis-undecaprenyl diphosphate + 7 diphosphate. Its function is as follows. Generates tritrans,heptacis-undecaprenyl diphosphate from isopentenyl pyrophosphate (IPP) and geranylgeranyl diphosphate. It is probably the precursor of glycosyl carrier lipids. In Sulfolobus acidocaldarius (strain ATCC 33909 / DSM 639 / JCM 8929 / NBRC 15157 / NCIMB 11770), this protein is Tritrans,polycis-undecaprenyl-diphosphate synthase (GGDP specific) (uppS).